We begin with the raw amino-acid sequence, 557 residues long: Protein PNS1 (557 aa).

The interval 1-58 (MSTEKQYQPQQPPPAYTGQGPDNGNAYGYPESYGKTETHSGDSCSGDTSMNPQQQGQQ) is disordered. Residues 1–99 (MSTEKQYQPQ…DNNKPKFNDW (99 aa)) lie on the Cytoplasmic side of the membrane. Over residues 41 to 58 (GDSCSGDTSMNPQQQGQQ) the composition is skewed to polar residues. A helical transmembrane segment spans residues 100 to 120 (PFIIVFLLTLCGFIVVASLTL). Residues 121–147 (RAWSQTYSSTGSGIYHDFDTGTLNTNS) lie on the Extracellular side of the membrane. Residues 148 to 168 (VILLVFSVVIAIFFAFIGIVL) form a helical membrane-spanning segment. Topologically, residues 169 to 174 (CRAYPK) are cytoplasmic. A helical membrane pass occupies residues 175-195 (FFIYAGMIVNILAALGTAIMY). Topologically, residues 196-200 (MSLKY) are extracellular. A helical transmembrane segment spans residues 201-221 (WSAGIVFLIFTFMTAWCYWGM). Residues 222 to 246 (RSRIPLTVAILRVIVLAMKNCPQSL) lie on the Cytoplasmic side of the membrane. Residues 247-267 (FVSFFGTIVASAFAMLFSTVV) traverse the membrane as a helical segment. The Extracellular segment spans residues 268 to 292 (VATYMKYDPSNTNSGCNVSGGDCSH). N-linked (GlcNAc...) asparagine glycosylation is present at asparagine 284. Residues 293–313 (AKLIGVLVVVFFCGYYISEVI) form a helical membrane-spanning segment. Residues 314–350 (RNVMHCTVSGVFGSWYYRYKSDQGMPKWPAMGAFKRA) are Cytoplasmic-facing. A helical transmembrane segment spans residues 351-371 (MTYSFGSICFGSLIVSIIETF). Residues 372–393 (RQLLQLGKQAAIASTDNANWIR) lie on the Extracellular side of the membrane. The chain crosses the membrane as a helical span at residues 394 to 414 (IIFWLIDMLVGFIQWIAQYFN). The Cytoplasmic segment spans residues 415-454 (HYAYCIIALYGKPYLKAAKQTWYMFREKGIDALINDNLVN). A helical membrane pass occupies residues 455–475 (VALGFYSLFASYMSCLFAFLY). Over 476–488 (LRFTKPGYNSDGD) the chain is Extracellular. The chain crosses the membrane as a helical span at residues 489–509 (FNAPLMAFAFVIALQLTNIAN). Residues 510–557 (ETIRSGCATFFTALGHDPEVFQAQYPDRFDEIFRSYPQVLNKLTHQDV) are Cytoplasmic-facing.

It belongs to the CTL (choline transporter-like) family.

The protein localises to the cell membrane. In terms of biological role, probably involved in transport through the plasma membrane. This Candida glabrata (strain ATCC 2001 / BCRC 20586 / JCM 3761 / NBRC 0622 / NRRL Y-65 / CBS 138) (Yeast) protein is Protein PNS1 (PNS1).